The chain runs to 120 residues: MTIEQILETIENMKVLELNELVKAAEEKFGVSASAAVVVGAAAGGAVEEEQTEFDVILDNAGSSKINVIKAVREITGLGLKEAKGVVDEAPKAIKEAISKEDAEAIKAKLEEAGASVTLK.

The protein belongs to the bacterial ribosomal protein bL12 family. Homodimer. Part of the ribosomal stalk of the 50S ribosomal subunit. Forms a multimeric L10(L12)X complex, where L10 forms an elongated spine to which 2 to 4 L12 dimers bind in a sequential fashion. Binds GTP-bound translation factors.

Forms part of the ribosomal stalk which helps the ribosome interact with GTP-bound translation factors. Is thus essential for accurate translation. The sequence is that of Large ribosomal subunit protein bL12 from Alkaliphilus metalliredigens (strain QYMF).